Consider the following 57-residue polypeptide: uncharacterized protein (57 aa).

Residues 12-34 (VIAVLSLFVFAVAVFFVGMALLT) form a helical membrane-spanning segment.

It is found in the membrane. This is an uncharacterized protein from Pasteurella multocida (strain Pm70).